We begin with the raw amino-acid sequence, 389 residues long: S-adenosylmethionine synthase (389 aa).

Residue His-15 coordinates ATP. Asp-17 contacts Mg(2+). A K(+)-binding site is contributed by Glu-43. L-methionine is bound by residues Glu-56 and Gln-99. Residues 99-109 (QSPDIAQGVNE) are flexible loop. ATP contacts are provided by residues 166 to 168 (DAK), 234 to 235 (RF), Asp-243, 249 to 250 (RK), Ala-266, and Lys-270. Asp-243 contributes to the L-methionine binding site. Residue Lys-274 participates in L-methionine binding.

The protein belongs to the AdoMet synthase family. Homotetramer; dimer of dimers. It depends on Mg(2+) as a cofactor. Requires K(+) as cofactor.

It localises to the cytoplasm. The catalysed reaction is L-methionine + ATP + H2O = S-adenosyl-L-methionine + phosphate + diphosphate. It functions in the pathway amino-acid biosynthesis; S-adenosyl-L-methionine biosynthesis; S-adenosyl-L-methionine from L-methionine: step 1/1. Catalyzes the formation of S-adenosylmethionine (AdoMet) from methionine and ATP. The overall synthetic reaction is composed of two sequential steps, AdoMet formation and the subsequent tripolyphosphate hydrolysis which occurs prior to release of AdoMet from the enzyme. This is S-adenosylmethionine synthase from Neisseria meningitidis serogroup B (strain ATCC BAA-335 / MC58).